Consider the following 392-residue polypeptide: MKCAVDIESRDVEEMYINIDPIQAGGRLTVDAMKAAISFADGYSVCDNCRSPFRLDYIQKPPIAQFHADLAAWLNMDTARVVPGARRGFQAVASTYVEKGDPVIVTSLAHYTEFVAVEEAGGIPLEVPKDEKNHITPDAAAEKIEAVILEFSKTPPLLFIDHVDYQFGNVHDVAAITKVAHQYDIPVLVNGAYSVGIMPVDGKALGADFVVGSGHKSMAAPAPSGVLATTNEHAERVFRTTQAKGDVTGRTFGIKEVEMMGCTLMGVTVVGMMASFPHVKERVKHWDTEVAHSQAVVDALLSIEGTKVLSDYPRQHTLTRIDTRESFDKVAQQHKKRGFFLSSDLKKRGITGVIPGSTRVWKFNTFGLTEKQIRHVGESFVEIARENGLNIV.

Pyridoxal 5'-phosphate contacts are provided by residues 85–86 (AR), N190, and 213–215 (SGH). K216 is modified (N6-(pyridoxal phosphate)lysine).

Belongs to the SepCysS family. Homodimer. Interacts with SepRS. It depends on pyridoxal 5'-phosphate as a cofactor.

The catalysed reaction is O-phospho-L-seryl-tRNA(Cys) + hydrogen sulfide + H(+) = L-cysteinyl-tRNA(Cys) + phosphate. In terms of biological role, converts O-phospho-L-seryl-tRNA(Cys) (Sep-tRNA(Cys)) to L-cysteinyl-tRNA(Cys) (Cys-tRNA(Cys)). In Methanoculleus marisnigri (strain ATCC 35101 / DSM 1498 / JR1), this protein is O-phospho-L-seryl-tRNA:Cys-tRNA synthase.